The primary structure comprises 428 residues: Homoserine dehydrogenase (428 aa).

Phe10, Thr12, Val13, Arg44, and Lys106 together coordinate NADPH. Val13 is a binding site for NAD(+). Residues Val13, Arg44, and Lys106 each contribute to the NADP(+) site. Positions 130, 133, 135, and 137 each coordinate Na(+). Positions 188 and 191 each coordinate NADP(+). Positions 191 and 202 each coordinate L-homoserine. Lys206 acts as the Proton donor in catalysis. Position 303 (Gly303) interacts with NADPH. Gly303 is an NAD(+) binding site. Gly303 provides a ligand contact to NADP(+). Residues 351-425 enclose the ACT domain; that stretch reads YFSVETPDST…DFKLLNYFKV (75 aa).

It belongs to the homoserine dehydrogenase family. It depends on a metal cation as a cofactor.

The catalysed reaction is L-homoserine + NADP(+) = L-aspartate 4-semialdehyde + NADPH + H(+). It catalyses the reaction L-homoserine + NAD(+) = L-aspartate 4-semialdehyde + NADH + H(+). The protein operates within amino-acid biosynthesis; L-methionine biosynthesis via de novo pathway; L-homoserine from L-aspartate: step 3/3. It functions in the pathway amino-acid biosynthesis; L-threonine biosynthesis; L-threonine from L-aspartate: step 3/5. Its function is as follows. Catalyzes the conversion of L-aspartate-beta-semialdehyde (L-Asa) to L-homoserine (L-Hse), the third step in the biosynthesis of threonine and methionine from aspartate. The protein is Homoserine dehydrogenase (hom) of Lactococcus lactis subsp. lactis (strain IL1403) (Streptococcus lactis).